Reading from the N-terminus, the 274-residue chain is MSFVALIPARAASIRLPDKPLADIAGKPMVVRVAERAALSGASLVCVATDDTRVERAVTEHGFPAVRTLSSHPTGTDRLAEAVRILGLPGDAIVVNVQGDEPLIEPTLIDGVAQLLADNPQADIATCACPLTDAQALFNPNVVKVVCGNDGRALYFSRAPIPWARDALAGGERMLAPGLPAWHHIGLYAYRVSFLQRFPTLAQGELERFESLEQLRAMEHGHTIVVSRISAAPAAGVDTPADLDRVRAIYLQAPKTEANQGLIQVQSDQGNDGR.

The protein belongs to the KdsB family.

The protein localises to the cytoplasm. The enzyme catalyses 3-deoxy-alpha-D-manno-oct-2-ulosonate + CTP = CMP-3-deoxy-beta-D-manno-octulosonate + diphosphate. The protein operates within nucleotide-sugar biosynthesis; CMP-3-deoxy-D-manno-octulosonate biosynthesis; CMP-3-deoxy-D-manno-octulosonate from 3-deoxy-D-manno-octulosonate and CTP: step 1/1. It participates in bacterial outer membrane biogenesis; lipopolysaccharide biosynthesis. In terms of biological role, activates KDO (a required 8-carbon sugar) for incorporation into bacterial lipopolysaccharide in Gram-negative bacteria. The sequence is that of 3-deoxy-manno-octulosonate cytidylyltransferase from Bordetella avium (strain 197N).